Here is a 641-residue protein sequence, read N- to C-terminus: UvrABC system protein C (641 aa).

The GIY-YIG domain occupies 16 to 95 (ESPGVYRFWD…IKQYEPRFNI (80 aa)). Residues 208–243 (TEYLRRLEKDMRAAAAAEDFERAARLRDDAAALRLA) form the UVR domain.

Belongs to the UvrC family. Interacts with UvrB in an incision complex.

It is found in the cytoplasm. Its function is as follows. The UvrABC repair system catalyzes the recognition and processing of DNA lesions. UvrC both incises the 5' and 3' sides of the lesion. The N-terminal half is responsible for the 3' incision and the C-terminal half is responsible for the 5' incision. This Acidothermus cellulolyticus (strain ATCC 43068 / DSM 8971 / 11B) protein is UvrABC system protein C.